An 85-amino-acid chain; its full sequence is Small ribosomal subunit protein bS18 (85 aa).

It belongs to the bacterial ribosomal protein bS18 family. Part of the 30S ribosomal subunit. Forms a tight heterodimer with protein bS6.

In terms of biological role, binds as a heterodimer with protein bS6 to the central domain of the 16S rRNA, where it helps stabilize the platform of the 30S subunit. The sequence is that of Small ribosomal subunit protein bS18 from Solidesulfovibrio magneticus (strain ATCC 700980 / DSM 13731 / RS-1) (Desulfovibrio magneticus).